Here is a 165-residue protein sequence, read N- to C-terminus: Leukotoxin-activating lysine-acyltransferase LktC (165 aa).

Catalysis depends on residues histidine 22 and aspartate 91.

It belongs to the RTX toxin acyltransferase family.

The protein localises to the cytoplasm. It carries out the reaction a fatty acyl-[ACP] + L-lysyl-[protein] = N(6)-(fatty acyl)-L-lysyl-[protein] + holo-[ACP] + H(+). Involved in fatty acylation of the protoxin (LktA) at two internal lysine residues, thereby converting it to the active toxin. In Pasteurella haemolytica-like sp. (strain 5943B), this protein is Leukotoxin-activating lysine-acyltransferase LktC (lktC).